Reading from the N-terminus, the 217-residue chain is NADPH-dependent 3-demethoxyubiquinone 3-hydroxylase, mitochondrial (217 aa).

The N-terminal 34 residues, Met1–Phe34, are a transit peptide targeting the mitochondrion. 2 tandem repeats follow at residues Ala48–Leu129 and Gly130–Leu217. Residues Ala48–Leu217 are 2 X approximate tandem repeats. Arg51 serves as a coordination point for NADH. Fe cation contacts are provided by Glu60, Glu90, His93, Glu142, Glu178, and His181. NADH contacts are provided by Lys208, Tyr212, and Arg216.

It belongs to the COQ7 family. As to quaternary structure, component of a multi-subunit COQ enzyme complex. Interacts with COQ8B and COQ6. Interacts with COQ9. Fe cation serves as cofactor.

It is found in the mitochondrion inner membrane. The enzyme catalyses a 5-methoxy-2-methyl-3-(all-trans-polyprenyl)benzoquinone + NADH + O2 = a 3-demethylubiquinone + NAD(+) + H2O. Its pathway is cofactor biosynthesis; ubiquinone biosynthesis. Functionally, catalyzes the hydroxylation of the 5-methoxy-2-methyl-3-(all-trans-polyprenyl)benzoquinone at the C6 position and participates in the biosynthesis of ubiquinone. Catalyzes the reaction through a substrate-mediated reduction pathway, whereby NADH shuttles electrons to 5-methoxy-2-methyl-3-(all-trans-decaprenyl)benzoquinone, which then transfers the electrons to the two Fe(3+) centers. The binding of 5-methoxy-2-methyl-3-(all-trans-polyprenyl)benzoquinone (DMQn) mediates reduction of the diiron center by nicotinamide adenine dinucleotide (NADH) and initiates oxygen activation for subsequent DMQ hydroxylation. The physiological substrates are 5-methoxy-2-methyl-3-(all-trans-nonaprenyl)benzoquinone (DMQ(9)) and 5-methoxy-2-methyl-3-(all-trans-decaprenyl)benzoquinone (DMQ(10)), however in vitro the enzyme does not have any specificity concerning the length of the polyprenyl tail, and accepts tails of various lengths with similar efficiency. Also has a structural role in the COQ enzyme complex, stabilizing other COQ polypeptides. Involved in lifespan determination in a ubiquinone-independent manner. Plays a role in modulating mitochondrial stress responses, acting in the nucleus, perhaps via regulating gene expression, independent of its characterized mitochondrial function in ubiquinone biosynthesis. This chain is NADPH-dependent 3-demethoxyubiquinone 3-hydroxylase, mitochondrial, found in Bos taurus (Bovine).